Reading from the N-terminus, the 861-residue chain is MKNDNRIIKNTIKQFKEKLCKDFSQKANITSITRKLAVFIDTILIQLFIKNKLHFGDNFCLLALGSYGRRELQLHSDIDLLILHTEKVSNIQLQRAQKFIQDCWDVGLEVSHQITTVSSCANLASQDLSVISTIMDMFLLCGHGALMEELIYQTHTLHMWPSHQYFFAKLQEQQNRYAKYGETAYNLEPNIKNGPGGLRDLQILLSISKRHFKIKKLAEGIGYGFITDKEYEELKYCQNFLWRVRFALHMLAGKPEERLSFDYQVKLAQFFGYQDQSHILAIEQFMKDYFKVIKRNRELNEMLLQWFNETIVYHQKQKIIRLDDEFQLSNRFIEVRNNRVFKQNPQSILKLFYWLVKRPDIEGVRASTIRLIRESLFLMGKRFRESKETANIFINIFRTGNDPYDALQRMNRYGVLAHYLDCFATATGQMQYDLFHAYTVDQHTLFVIRNISRFKKNEYAKQFPLCAKIITALEKPEILYLGALFHDIAKGRGGDHSELGAIEAQQFTQRHYMEAEDSKLIVWLVRYHLLMSQTAQRKDIYDPKTIEQFCQLLPHARYLDYLYLLTVADICGTNPTLWNAWKDSLLKELYHAAKTRLHKQQELLDEAALISIRKQYAMDILISDGISSRVIQDLWSQFKGKYFLHESPEVIARHTKAILNSKQFPVVIIMPHHSQGGTEVFIYMPHKDERFTITTSVLSNHHVTIQEAAIITCDNQFDLDTYIILDENNQAFLNEQRARDIQKNLCDHLANTGRLPAVSRRRLSRALTHFNVKTQINFIDDNTNHQTQLFLVTNDRPGLLATISRVFLTLNIHLHNAKIATAGERVEDMFYISNQTGYSLNHEEKTILKEKLILEISKSKY.

Residues 1–321 (MKNDNRIIKN…VYHQKQKIIR (321 aa)) form a uridylyltransferase region. The tract at residues 322-678 (LDDEFQLSNR…IMPHHSQGGT (357 aa)) is uridylyl-removing. One can recognise an HD domain in the interval 440 to 562 (VDQHTLFVIR…LPHARYLDYL (123 aa)). 2 ACT domains span residues 679–760 (EVFI…AVSR) and 788–861 (QLFL…KSKY).

This sequence belongs to the GlnD family. The cofactor is Mg(2+).

The catalysed reaction is [protein-PII]-L-tyrosine + UTP = [protein-PII]-uridylyl-L-tyrosine + diphosphate. It carries out the reaction [protein-PII]-uridylyl-L-tyrosine + H2O = [protein-PII]-L-tyrosine + UMP + H(+). Its activity is regulated as follows. Uridylyltransferase (UTase) activity is inhibited by glutamine, while glutamine activates uridylyl-removing (UR) activity. Modifies, by uridylylation and deuridylylation, the PII regulatory proteins (GlnB and homologs), in response to the nitrogen status of the cell that GlnD senses through the glutamine level. Under low glutamine levels, catalyzes the conversion of the PII proteins and UTP to PII-UMP and PPi, while under higher glutamine levels, GlnD hydrolyzes PII-UMP to PII and UMP (deuridylylation). Thus, controls uridylylation state and activity of the PII proteins, and plays an important role in the regulation of nitrogen assimilation and metabolism. This chain is Bifunctional uridylyltransferase/uridylyl-removing enzyme, found in Legionella pneumophila (strain Corby).